The following is a 217-amino-acid chain: Zinc finger CCHC-type and RNA-binding motif-containing protein 1 (217 aa).

The region spanning 10–88 (STVYVSNLPF…RVIKASIAID (79 aa)) is the RRM domain. The segment at 105-122 (SKCYECGESGHLSYACPK) adopts a CCHC-type zinc-finger fold. Positions 120–217 (CPKNMLGERE…YFSDEEELSD (98 aa)) are disordered. Residues 145–163 (PEEEIEEVEESEDEGEDPA) show a composition bias toward acidic residues. A phosphoserine mark is found at Ser155, Ser210, and Ser216.

As to quaternary structure, component of the U11/U12 snRNPs that are part of the U12-type spliceosome.

It is found in the nucleus. It localises to the nucleoplasm. This is Zinc finger CCHC-type and RNA-binding motif-containing protein 1 (ZCRB1) from Homo sapiens (Human).